The chain runs to 227 residues: Hydroxylase/desaturase asaB (227 aa).

It belongs to the asaB hydroxylase/desaturase family.

It functions in the pathway secondary metabolite biosynthesis. Its function is as follows. Hydroxylase/desaturase; part of the gene cluster that mediates the biosynthesis of aspergillic acid, a hydroxamic acid-containing pyrazinone with aliphatic side chains that originates from leucine (Leu) and isoleucine (Ile). Aspergillic acid has antibiotic properties and was shown to be lethal to mice. The first step in the pathway is the production of deoxyaspergillic acid via a condensation between the Ile amine and the Leu carboxylic acid, followed by a reductive release from the protein forming the dipeptide aldehyde NH(2)-Leu-Ile-CHO, which could undergo an intermolecular cyclization resulting in a dihydropyrazinone. As the NRPS asaC lacks a condensation domain, it is improbable that it is responsible for condensation of Leu and Ile. One possibility is that asaC acts on a previously condensed dipeptide and functions as a Leu-Ile reductase to yield deoxyaspergillic acid. After asaC forms deoxyaspergillic acid, the cytochrome P450 asaD oxidizes the pyrazinone to the hydroxamic acid-containing bioactive metabolite aspergillic acid. The hydroxylase/desaturase asaB can then convert aspergillic acid to hydroxyaspergillic acid. Both aspergillic acid and hydroxyaspergillic acid can form complexes with iron producing ferriaspergillin analogs. The protein is Hydroxylase/desaturase asaB of Aspergillus flavus (strain ATCC 200026 / FGSC A1120 / IAM 13836 / NRRL 3357 / JCM 12722 / SRRC 167).